Consider the following 342-residue polypeptide: N-acetyl-gamma-glutamyl-phosphate reductase (342 aa).

Cys147 is a catalytic residue.

This sequence belongs to the NAGSA dehydrogenase family. Type 1 subfamily.

The protein localises to the cytoplasm. It catalyses the reaction N-acetyl-L-glutamate 5-semialdehyde + phosphate + NADP(+) = N-acetyl-L-glutamyl 5-phosphate + NADPH + H(+). It functions in the pathway amino-acid biosynthesis; L-arginine biosynthesis; N(2)-acetyl-L-ornithine from L-glutamate: step 3/4. Catalyzes the NADPH-dependent reduction of N-acetyl-5-glutamyl phosphate to yield N-acetyl-L-glutamate 5-semialdehyde. This Methanosphaera stadtmanae (strain ATCC 43021 / DSM 3091 / JCM 11832 / MCB-3) protein is N-acetyl-gamma-glutamyl-phosphate reductase.